We begin with the raw amino-acid sequence, 197 residues long: Segregation and condensation protein B (197 aa).

This sequence belongs to the ScpB family. In terms of assembly, homodimer. Homodimerization may be required to stabilize the binding of ScpA to the Smc head domains. Component of a cohesin-like complex composed of ScpA, ScpB and the Smc homodimer, in which ScpA and ScpB bind to the head domain of Smc. The presence of the three proteins is required for the association of the complex with DNA.

It localises to the cytoplasm. Functionally, participates in chromosomal partition during cell division. May act via the formation of a condensin-like complex containing Smc and ScpA that pull DNA away from mid-cell into both cell halves. This Halalkalibacterium halodurans (strain ATCC BAA-125 / DSM 18197 / FERM 7344 / JCM 9153 / C-125) (Bacillus halodurans) protein is Segregation and condensation protein B.